The chain runs to 983 residues: MRPAALLLLPSLLALLVHGLSLEAPTEGEGQAPGLEEMDGELTAAPTPEQPEPGVHFVTTAPTLKLLNHHPLLEEFLQEGQEKDELRPDPPTASPLPRLANQDSRPVFTSPTPVMVAAPTQPQSREGPWSLESEPPALRITVALPPGPGMAVPTPGPGERPNTPPPSGAWTPTPEGPGDIGRPWAPGVMSQTTGLGMEGTVATSTASGDDEETTSTSTIITTAVTTVQPPGPCSWNFSGPEGSLDSPTASNSPPDVGLDCFYYISVYPGYGVEIKVQNISLREGETVTVEGLGGPDPLPLANQSFLLRGQVIRSPTHQAALRFQSLPPPAGPGTFHFHYQAYLLSCHFPRRPAYGAVTVTSLHPGGSARFRCATGYQLKGARLLTCLNATQPFWDSQEPVCIAACGGVIRNATTGRIVSPGFPGNYSNNLTCHWLLEAPEGQRLHLHFEKVSLAEDDDRLIIRNGDNVEAPPVYDSYEVEYLPIEGLLSSSRHFFVELSTDSSGVAAGMALRYEAFQQGHCYEPFVKYGNFSSSAPSYPVGTTVEFSCDPGYTLEQGSIIIECVDPHDPQWNETEPACRAVCSGETTDSAGVVLSPNWPEPYGRGQDCIWGVHVEEDKRIMLDVRVLRIGTGDVLTFYDGDDLTARVLGQYSGPRGHFKLFTSMADVTIQFQSDPGASVLGYQQGFVIHFFEVPRNDTCPELPEIPNGWKSPSQPELVHGTVVTYQCYPGYQVVGSSVLMCQWDLTWSEDLPSCQRVTSCLDPGDVEHSRRLISSPKFPVGATVQYICDQGFVLTGSALLTCHDRQASSPKWSDRTPKCLLEQLKPCHGLSAPENGARSPEKRLHPAGATVHFSCAPGYVLKGQASIKCVPGHPSHWSDPPPICRAASLDGFYSGRSLDVAKVPAASSTLDAAHLAAAIFLPLVAMALLVGGVYLYFCRLQGNSPLQLPRTRPRPYDRITVESAFDNPTYETGSLSFAGDERI.

Residues 1–19 form the signal peptide; sequence MRPAALLLLPSLLALLVHG. Disordered stretches follow at residues 80-132 and 148-194; these read GQEK…WSLE and PGMA…QTTG. Over residues 101-112 the composition is skewed to polar residues; the sequence is NQDSRPVFTSPT. Residues 154–167 are compositionally biased toward pro residues; sequence TPGPGERPNTPPPS. N-linked (GlcNAc...) asparagine glycosylation is present at N278. Residues 344–403 form the Sushi 1 domain; that stretch reads LSCHFPRRPAYGAVTVTSLHPGGSARFRCATGYQLKGARLLTCLNATQPFWDSQEPVCIA. Disulfide bonds link C346/C386, C372/C401, C405/C432, C521/C563, C548/C578, C582/C608, C699/C741, C727/C754, C760/C802, C788/C819, C827/C869, and C855/C884. N-linked (GlcNAc...) asparagine glycans are attached at residues N388, N425, and N530. Residues 405 to 516 enclose the CUB 1 domain; it reads CGGVIRNATT…AGMALRYEAF (112 aa). Positions 519 to 580 constitute a Sushi 2 domain; the sequence is GHCYEPFVKY…WNETEPACRA (62 aa). The CUB 2 domain maps to 582-693; sequence CSGETTDSAG…QGFVIHFFEV (112 aa). 3 Sushi domains span residues 697–756, 758–821, and 825–886; these read DTCP…SCQR, TSCL…KCLL, and KPCH…ICRA. A helical transmembrane segment spans residues 915 to 935; that stretch reads LAAAIFLPLVAMALLVGGVYL.

The protein belongs to the SEZ6 family.

It localises to the cell membrane. Its function is as follows. May play a role in cell-cell recognition and in neuronal membrane signaling. Seems to be important for the achievement of the necessary balance between dendrite elongation and branching during the elaboration of a complex dendritic arbor. Involved in the development of appropriate excitatory synaptic connectivity. The protein is Seizure protein 6 homolog (SEZ6) of Bos taurus (Bovine).